We begin with the raw amino-acid sequence, 577 residues long: Protein CBFA2T1 (577 aa).

Basic and acidic residues predominate over residues 1–10 (MPDRTEKHST). The interval 1–87 (MPDRTEKHST…SSSSLANQQL (87 aa)) is disordered. Position 14 is a phosphoserine (Ser-14). Residues 42–59 (SSFTPTTLTNGTSHSPTA) show a composition bias toward polar residues. Over residues 68–87 (NGFSNGPSSSSSSSLANQQL) the composition is skewed to low complexity. In terms of domain architecture, TAFH spans 93–188 (ARQLSKLKRF…NPAQYLAQHE (96 aa)). Positions 203-271 (SELLLDVNEN…LPHPTPPPPQ (69 aa)) are disordered. Residues 211–237 (ENGKRRTPDRTKENGFDREPLHSEHPS) show a composition bias toward basic and acidic residues. Polar residues predominate over residues 244 to 258 (SPGQRYSPNNGLSYQ). A compositionally biased stretch (pro residues) spans 262–271 (LPHPTPPPPQ). The segment at 310–356 (QEEMIDHRLTDREWAEEWKHLDHLLNCIMDMVEKTRRSLTVLRRCQE) is important for oligomerization. Positions 310–356 (QEEMIDHRLTDREWAEEWKHLDHLLNCIMDMVEKTRRSLTVLRRCQE) are nervy homology region 2 (NHR2). The segment at 374–396 (DLKKGGSSSSSHSRQQSPVNPDP) is disordered. The segment covering 380–390 (SSSSSHSRQQS) has biased composition (low complexity). At Ser-390 the chain carries Phosphoserine. Residues 416 to 465 (EEIWKKAEEAVNEVKRQAMTELQKAVSEAERKAHDMITTERAKMERTVAE) are nervy homology region 3 (NHR3). Residues Cys-488, Cys-491, Cys-499, Cys-502, Cys-508, Cys-512, His-520, and Cys-524 each coordinate Zn(2+). The MYND-type zinc-finger motif lies at 488–524 (CWNCGRKASETCSGCNTARYCGSFCQHKDWEKHHHIC). The disordered stretch occupies residues 529-577 (QAPQQGDTPAVSSSVTPSSGAGSPMDTPPAATPRSTTPGTPSTIETTPR). 2 stretches are compositionally biased toward low complexity: residues 536 to 553 (TPAV…GSPM) and 560 to 577 (TPRS…TTPR).

It belongs to the CBFA2T family. As to quaternary structure, homotetramer. Heterotetramer with CBFA2T2 and CBFA2T3. Interacts with TCF12, SIN3A, HDAC1, HDAC2, HDAC3, NCOR1 and NCOR2. Interacts with ATN1 (via its N-terminus); the interaction enhances the transcriptional repression.

Its subcellular location is the nucleus. In terms of biological role, transcriptional corepressor which facilitates transcriptional repression via its association with DNA-binding transcription factors and recruitment of other corepressors and histone-modifying enzymes. Can repress the expression of MMP7 in a ZBTB33-dependent manner. Can repress transactivation mediated by TCF12. Acts as a negative regulator of adipogenesis. The chain is Protein CBFA2T1 (Runx1t1) from Mus musculus (Mouse).